The sequence spans 356 residues: MVAVERVESLAKSGIISIPKEYIRPKEELESINDVFLEEKKEDGPQVPTIDLKNIESDDEKIRENCIEELKKASLDWGVMHLINHGIPADLMERVKKAGEEFFSLSVEEKEKYANDQATGKIQGYGSKLANNASGQLEWEDYFFHLAYPEEKRDLSIWPKTPSDYIEATSEYAKCLRLLATKVFKALSVGLGLEPDRLEKEVGGLEELLLQMKINYYPKCPQPELALGVEAHTDVSALTFILHNMVPGLQLFYEGKWVTAKCVPDSIVMHIGDTLEILSNGKYKSILHRGLVNKEKVRISWAVFCEPPKDKIVLKPLPEMVSVESPAKFPPRTFAQHIEHKLFGKEQEELVSEKND.

Residues tyrosine 142 and lysine 213 each contribute to the substrate site. A Fe2OG dioxygenase domain is found at 208–307 (LLLQMKINYY…RISWAVFCEP (100 aa)). 215–217 (NYY) contributes to the 2-oxoglutarate binding site. Histidine 232 serves as a coordination point for Fe cation. Threonine 233 contributes to the substrate binding site. Fe cation is bound by residues aspartate 234 and histidine 288. 298–300 (RIS) is a 2-oxoglutarate binding site. Residues glutamate 306 and lysine 341 each coordinate substrate.

The protein belongs to the iron/ascorbate-dependent oxidoreductase family. It depends on L-ascorbate as a cofactor. The cofactor is Fe(2+). As to expression, expressed in young seedlings (at protein level).

It carries out the reaction a (2R,3S,4S)-leucoanthocyanidin + 2-oxoglutarate + O2 = a 4-H-anthocyanidin with a 3-hydroxy group + succinate + CO2 + 2 H2O. The enzyme catalyses (2R,3S,4S)-3,4-leucopelargonidin + 2-oxoglutarate + O2 = (4S)-2,3-dehydroleucopelargonidin + succinate + CO2 + H2O + H(+). The catalysed reaction is (2R,3S,4S)-leucocyanidin + 2-oxoglutarate + O2 = (4S)-2,3-dehydroleucocyanidin + succinate + CO2 + H2O + H(+). It participates in pigment biosynthesis; anthocyanin biosynthesis. Functionally, involved in anthocyanin and protoanthocyanidin biosynthesis by catalyzing the oxidation of leucoanthocyanidins into anthocyanidins. Possesses low flavonol synthase activity in vitro towards dihydrokaempferol and dihydroquercetin producing kaempferol and quercitin, respectively. The protein is Leucoanthocyanidin dioxygenase (LDOX) of Arabidopsis thaliana (Mouse-ear cress).